Reading from the N-terminus, the 77-residue chain is SS18-like protein 2 (77 aa).

Positions 50 to 53 (YQHV) match the SH2-binding motif.

The protein belongs to the SS18 family.

This is SS18-like protein 2 (Ss18l2) from Mus musculus (Mouse).